Consider the following 424-residue polypeptide: Glutamyl-tRNA reductase (424 aa).

Substrate is bound by residues 49–52, serine 105, 110–112, and glutamine 116; these read TCNR and EPQ. Residue cysteine 50 is the Nucleophile of the active site. 185-190 lines the NADP(+) pocket; the sequence is GSGETA.

This sequence belongs to the glutamyl-tRNA reductase family. As to quaternary structure, homodimer.

It catalyses the reaction (S)-4-amino-5-oxopentanoate + tRNA(Glu) + NADP(+) = L-glutamyl-tRNA(Glu) + NADPH + H(+). Its pathway is porphyrin-containing compound metabolism; protoporphyrin-IX biosynthesis; 5-aminolevulinate from L-glutamyl-tRNA(Glu): step 1/2. Functionally, catalyzes the NADPH-dependent reduction of glutamyl-tRNA(Glu) to glutamate 1-semialdehyde (GSA). The chain is Glutamyl-tRNA reductase from Legionella pneumophila (strain Paris).